A 456-amino-acid polypeptide reads, in one-letter code: Probable serine/threonine-protein kinase DDB_G0277449 (456 aa).

Residues 50-83 (STSPTECEESSSSTITTPSEESLSSGEESSSISD) are compositionally biased toward low complexity. Residues 50–84 (STSPTECEESSSSTITTPSEESLSSGEESSSISDS) form a disordered region. Residues 128 to 383 (FIIKHLVGKG…AIEIKRHPFF (256 aa)) form the Protein kinase domain. ATP-binding positions include 134–142 (VGKGGFGKV) and K157. Residue D251 is the Proton acceptor of the active site. Residues 384–455 (KSIQWRKIEN…VRTPVLLESQ (72 aa)) form the AGC-kinase C-terminal domain.

This sequence belongs to the protein kinase superfamily. AGC Ser/Thr protein kinase family.

It carries out the reaction L-seryl-[protein] + ATP = O-phospho-L-seryl-[protein] + ADP + H(+). The enzyme catalyses L-threonyl-[protein] + ATP = O-phospho-L-threonyl-[protein] + ADP + H(+). The chain is Probable serine/threonine-protein kinase DDB_G0277449 from Dictyostelium discoideum (Social amoeba).